A 150-amino-acid chain; its full sequence is Large ribosomal subunit protein bL9 (150 aa).

It belongs to the bacterial ribosomal protein bL9 family.

Functionally, binds to the 23S rRNA. The polypeptide is Large ribosomal subunit protein bL9 (Cupriavidus taiwanensis (strain DSM 17343 / BCRC 17206 / CCUG 44338 / CIP 107171 / LMG 19424 / R1) (Ralstonia taiwanensis (strain LMG 19424))).